We begin with the raw amino-acid sequence, 393 residues long: uncharacterized protein (393 aa).

An ATP-binding site is contributed by 67-74; it reads GPDGMGKS.

This is an uncharacterized protein from Mycobacterium tuberculosis (strain CDC 1551 / Oshkosh).